The primary structure comprises 392 residues: Lipase (392 aa).

The signal sequence occupies residues methionine 1–alanine 26. A propeptide spanning residues valine 27–arginine 95 is cleaved from the precursor. The interval proline 50 to glutamine 69 is disordered. Cystine bridges form between cysteine 152/cysteine 391, cysteine 163/cysteine 166, and cysteine 358/cysteine 367. Serine 268 acts as the Nucleophile in catalysis. The Charge relay system role is filled by aspartate 327. Aspartate 379 contributes to the Ca(2+) binding site. The Charge relay system role is filled by histidine 380.

Belongs to the AB hydrolase superfamily. Lipase family.

It localises to the secreted. Its subcellular location is the extracellular space. The enzyme catalyses a triacylglycerol + H2O = a diacylglycerol + a fatty acid + H(+). Its activity is regulated as follows. Lipase activity is maximal at a lipid-water interface (interfacial activation), probably by an induced conformational change that results in an increased accessibility of the active site to the substrate. Functionally, hydrolyzes ester bonds of triglycerides as well as of their derived partial glycerides with a strong 1,3-positional specificity. The protein is Lipase of Rhizopus niveus.